The sequence spans 169 residues: Zinc metalloproteinase-disintegrin-like mikarin (169 aa).

Residues 14-57 enclose the Peptidase M12B domain; the sequence is KYLEYVVVDNNMYRNYGNAGPCVMSAEISFEPLQEFSSCDIQEP. Residues 65–129 enclose the Disintegrin domain; that stretch reads PAVCGNYYVE…PEICTGRSAK (65 aa). 6 disulfides stabilise this stretch: C68–C97, C79–C92, C81–C87, C105–C111, C110–C123, and C150–C161. The D/ECD-tripeptide signature appears at 116 to 118; the sequence is DCD.

The protein belongs to the venom metalloproteinase (M12B) family. P-III subfamily. P-IIIa sub-subfamily. As to quaternary structure, monomer. The cofactor is Zn(2+). Expressed by the venom gland.

It localises to the secreted. With respect to regulation, inhibited by EDTA, but not by PMSF. Its function is as follows. Snake venom zinc metalloproteinase that calcium-independently catalyzes the conversion of prothrombin (F2) to alpha-thrombin through the formation of a thrombin intermediate. This is Zinc metalloproteinase-disintegrin-like mikarin from Micropechis ikaheca (New Guinean small-eyed snake).